A 121-amino-acid polypeptide reads, in one-letter code: UPF0344 protein BC_1150 (121 aa).

A run of 4 helical transmembrane segments spans residues 6–26 (ITAW…YSAG), 38–58 (LMYI…VKTA), 65–85 (WYGL…MVLV), and 92–112 (PTGA…YLGL).

Belongs to the UPF0344 family.

It is found in the cell membrane. This is UPF0344 protein BC_1150 from Bacillus cereus (strain ATCC 14579 / DSM 31 / CCUG 7414 / JCM 2152 / NBRC 15305 / NCIMB 9373 / NCTC 2599 / NRRL B-3711).